The chain runs to 475 residues: BICD family-like cargo adapter 2 (475 aa).

The stretch at glutamate 56 to methionine 275 forms a coiled coil. Composition is skewed to polar residues over residues histidine 286–glutamine 300 and serine 308–tyrosine 318. Positions histidine 286–tyrosine 318 are disordered. Residues arginine 340–threonine 413 are a coiled coil. Positions glutamine 440 to proline 450 are enriched in low complexity. The segment at glutamine 440–leucine 459 is disordered.

It belongs to the BICDR family.

The protein is BICD family-like cargo adapter 2 (bicdl2) of Xenopus tropicalis (Western clawed frog).